A 234-amino-acid chain; its full sequence is Sperm flagellar protein 1 (234 aa).

A Calponin-homology (CH) domain is found at 7 to 112 (EEALHQLYLW…VLIPLRQRLE (106 aa)). The interval 181–234 (VLQIAEKEQELLASQETVQVLQMKVKRLEHLLQLKNVRIDDLSRRLQQAERKQR) is essential for homodimerization and microtubule bundling activity.

As to quaternary structure, homodimer. Interacts with actin, TJP1, CGN and CDH1. Expressed predominantly in the seminiferous epithelium of adult testis. Expressed in pillar cells of the organ of Corti (at protein level). Expressed in brain, kidney, lung and testis. Highly expressed in the trachea, lung and oviduct.

The protein localises to the cytoplasm. It localises to the cell projection. Its subcellular location is the cilium. The protein resides in the flagellum. It is found in the cytoskeleton. The protein localises to the cilium axoneme. It localises to the apical cell membrane. Its subcellular location is the basolateral cell membrane. The protein resides in the stress fiber. It is found in the microvillus. The protein localises to the lamellipodium. It localises to the filopodium. Functionally, microtubule-associated protein that promotes microtubule bundling and stabilizes microtubules against depolymerization in response to cold shock. Microtubule-associated protein involved in the stabilization of microtubules along the axis of migration during radial intercalation. Promotes the establishment and stabilization of an axis of microtubules required for the active migration of cells into the outer epithelium. Essential for ciliary central apparatus formation which requires both its microtubule-binding and bundling activities and for ciliary localization of HYDIN and SPAG6 in ependymal cilia. Binds actin in intestinal epithelial cells (IECs), essential for IECs survival and contributes to formation of filopodia and lamellipodia in migrating IECs. Regulates planar cell polarity signaling pathway and asymmetric microtubule accumulation in ciliated epithelia. The protein is Sperm flagellar protein 1 (Spef1) of Mus musculus (Mouse).